Consider the following 90-residue polypeptide: Small ribosomal subunit protein bS20 (90 aa).

A compositionally biased stretch (polar residues) spans 1 to 10; it reads MANHKSTQKS. Residues 1–25 form a disordered region; it reads MANHKSTQKSIRQDQKRNLINKSRK.

It belongs to the bacterial ribosomal protein bS20 family.

Its function is as follows. Binds directly to 16S ribosomal RNA. In Orientia tsutsugamushi (strain Ikeda) (Rickettsia tsutsugamushi), this protein is Small ribosomal subunit protein bS20.